The primary structure comprises 925 residues: MLSKIVGSVIGTKNDRELKRMRQIVAKVNAQEAAISALTDAQLRDKTAEFKSRFDEGASLDSLLPEAFAVCREASKRVLGMRHYDVQIIGGITLHEGKIAEMRTGEGKTLMATLAIYLNAISGKGVHVVTVNDYLAARDAELNRPLFDFLGLTVGVIYSQQPPYEKVAAYQSDITYGTNNEYGFDYLRDNMVFSLAEKKQRPLNYCIIDEIDSILIDEARTPLIISGQADDSSATYALINNIIPRLTRSTDEEANKENEDGDFWIDEKNRQIEISEKGYEKIESFLIEVGELGENESLYSPIRLPLLAHVQAAIRAHHIFIKNVHYIVDNGEVIIVDENTGRTMPGRRWSDGLHQAVEAKEGVEIQAENQTLATTTFQNYFRLYDKLSGMTGTADTEAAEFKSTYDIDVVVIPTHKPIARIDLEDQIFLTKLGKYKGIIREIKEIQAKGAPVLVGTATIEASEELSYLLDQEGIKHNVLNAKQHEREAEIIAQAGSPKAVTIATNMAGRGTDIILGGNWQAHISDPDNVSPEEMQRLKAAWQKKHDEVLAAGGLHIIGSERHESRRIDNQLRGRAGRQGDPGQSRFFLSLEDDLMRIFAGDRVVNMMRAMGLKEDEAIEHKMVSRSIENAQGKVESRDFDARKNLLKYDDIANEQRKVIYSQRDDLLAEADLKQAIEAMHRDVYDALISQFVPPGSIDDQWNIDGLEDELESEFKYYMPINDWLDSDRRLDEEGLREKIVQTAIARYRERRELMTPENAAQLERHFMLQSLDRHWKEHLTQMDQLRKGIHLRGYAQKDPQQEYKRESFELFQMMLGAIKSDTVQDLSRVHIPTREELEAMEAERLAQAERQQMMFEHDEVDSLTGERHSDPDVEARNLAAEQQATATKAPAAANGNNPYANMNISRNAPCPCGSGLRYKQCHGKI.

Residues Gln-87, 105-109 (GEGKT), and Asp-512 contribute to the ATP site. Residues Cys-910, Cys-912, Cys-921, and His-922 each coordinate Zn(2+).

Belongs to the SecA family. Monomer and homodimer. Part of the essential Sec protein translocation apparatus which comprises SecA, SecYEG and auxiliary proteins SecDF-YajC and YidC. It depends on Zn(2+) as a cofactor.

The protein localises to the cell inner membrane. It is found in the cytoplasm. It carries out the reaction ATP + H2O + cellular proteinSide 1 = ADP + phosphate + cellular proteinSide 2.. In terms of biological role, part of the Sec protein translocase complex. Interacts with the SecYEG preprotein conducting channel. Has a central role in coupling the hydrolysis of ATP to the transfer of proteins into and across the cell membrane, serving both as a receptor for the preprotein-SecB complex and as an ATP-driven molecular motor driving the stepwise translocation of polypeptide chains across the membrane. The polypeptide is Protein translocase subunit SecA (Psychrobacter sp. (strain PRwf-1)).